The sequence spans 901 residues: MAAQNEQRPERIKTTPYLEGDVLSNDSGPLLSVFALQEIMQKVRQVQADYMTATREVDFTVPDVQKILDDIKTLAAEQVYKIVKIPSISFRHIVMQSRDRVLRVDTYYEEMSQVGDVITEDEPEKFYSTIIKKVRFIREKGSFILHDIPTRDHRGMEVAEPEVLGVEFKNVLPVLTAEHRAMIQNALDGSIIENGNVATRDVDVFIGACSEPIYRIYNRLQGYIEAVQLQELRNSIGWLGRLGQRKRITYSQEVLTDFRRQDTIWVLALQLPVNPQVVWDVPRSSIANLIMNIATCLPTGEYIAPNPRISSITLTQRITTTGPFAILTGSTPTAQQLNDVRKIYLALMFPGQIILDLKIDPGERMDPAVRMVAGVVGHLLFTAGGRFTNLTQDMARQLDIALNDYLLYMYNTRVQVKYGPTGEPLDFQMGRNQYDCNVFRADFATGTGYNGWATIDVEYRDPAPYVHAQRYIRYCGIDSRELINPTTYGIGMTYHCYNEMLRMLVAAGKDSEAAYFRSMLPFHMVRFARINQIINEDLHSVFSLPDDMFNALLPDLIAGAHQNADPVVLDVSWISLWFAFNRSFEPTHRNEMLEIAPLIESVYASELSVMKVDMRHLSLMQRRFPDVLIQARPSHFWKAVLNDSPEAVKAVMNLSHSHNFINIRDMMRWVLLPSLQPSLKLVLEEEAWAAANDFEDLMLTDQVYMHRDMLPEPRLDDIERFRQEGFYYTNMLEAPPEIDRVDQNTYEIARLQANMGQFRAALRRIMDDDDWVRFGGVLRTVRVKFFDARPPDDILQGLPFSYDTNEKGGLSYATIKYATETTIFYLIYNVEFSNTPDSLVLINPTYTMTKVFINKRIVERVRVGQILAVLNRRFVAYKGKMRIMDITQSLKMGTKLAAPTV.

This sequence belongs to the turreted BTV-fold inner capsid family. In terms of assembly, homodecamer; each decamer is made up of two conformers of VP2, called VP2A and VP2B. 12 homodecamers assemble to form an icosahedral capsid.

The protein localises to the virion. Functionally, inner capsid protein that self-assembles to form an icosahedral capsid with a T=2 symmetry, which consists of 120 copies of VP2, with channels at each of its five-fold vertices. This capsid constitutes the innermost concentric layer of the viral mature particle. This is Inner capsid protein VP3 (Segment-3) from Bluetongue virus 13 (isolate USA) (BTV 13).